Here is an 87-residue protein sequence, read N- to C-terminus: Probable acyl carrier protein PigG (87 aa).

Residues 1 to 78 enclose the Carrier domain; it reads MLESKLINHI…SMVALVQRLK (78 aa). Residue Ser36 is modified to O-(pantetheine 4'-phosphoryl)serine.

It functions in the pathway antibiotic biosynthesis; prodigiosin biosynthesis. Its function is as follows. Involved in the biosynthesis of 4-methoxy-2,2'-bipyrrole-5-carbaldehyde (MBC), one of the terminal products involved in the biosynthesis of the red antibiotic prodigiosin (Pig). Carrier of the L-prolyl group transferred from L-prolyl-AMP by PigI. The chain is Probable acyl carrier protein PigG from Serratia sp. (strain ATCC 39006) (Prodigiosinella confusarubida).